Here is a 424-residue protein sequence, read N- to C-terminus: Anaerobic glycerol-3-phosphate dehydrogenase subunit B (424 aa).

The protein belongs to the anaerobic G-3-P dehydrogenase subunit B family. In terms of assembly, composed of a catalytic GlpA/B dimer and of membrane bound GlpC. It depends on FMN as a cofactor.

It carries out the reaction a quinone + sn-glycerol 3-phosphate = dihydroxyacetone phosphate + a quinol. The protein operates within polyol metabolism; glycerol degradation via glycerol kinase pathway; glycerone phosphate from sn-glycerol 3-phosphate (anaerobic route): step 1/1. In terms of biological role, conversion of glycerol 3-phosphate to dihydroxyacetone. Uses fumarate or nitrate as electron acceptor. The chain is Anaerobic glycerol-3-phosphate dehydrogenase subunit B from Yersinia pestis bv. Antiqua (strain Antiqua).